A 790-amino-acid chain; its full sequence is Cadherin-20 (790 aa).

Positions 1–25 (MSCKRSYHRHCALVYYMVLLDLTNA) are cleaved as a signal peptide. Residues 26 to 52 (VFEFSHPLIRDSGNSQSRQLLHHRLKR) constitute a propeptide that is removed on maturation. Residues 26–612 (VFEFSHPLIR…PYTLPISLSR (587 aa)) lie on the Extracellular side of the membrane. 5 Cadherin domains span residues 54–158 (WVWN…EPKF), 159–267 (LDGP…PPRF), 268–382 (PQKH…PPVF), 383–487 (GSSF…APTF), and 487–605 (FTKF…EPYT). Residues asparagine 254, asparagine 283, asparagine 413, asparagine 454, and asparagine 535 are each glycosylated (N-linked (GlcNAc...) asparagine). Residues 613-633 (GALIAILTCIFVLLVLVLLIL) traverse the membrane as a helical segment. Topologically, residues 634 to 790 (SMRRHRKQPY…YGTKDNNGSL (157 aa)) are cytoplasmic.

As to expression, detected in embryonic posterior neural plate, embryonic neural tube, sulcus limitans and embryonic kidney.

Its subcellular location is the cell membrane. Its function is as follows. Cadherins are calcium-dependent cell adhesion proteins. They preferentially interact with themselves in a homophilic manner in connecting cells; cadherins may thus contribute to the sorting of heterogeneous cell types. This Xenopus laevis (African clawed frog) protein is Cadherin-20 (cdh20).